The sequence spans 205 residues: Probable calcium-binding protein CML41 (205 aa).

Residues 26–55 (SFQNRRRSPKSNSSSTLNSPRSNSDDNNNI) are disordered. Positions 35–54 (KSNSSSTLNSPRSNSDDNNN) are enriched in low complexity. 4 EF-hand domains span residues 60–95 (ASKEELRQVFSHFDSDGDGKISAFELRHYFGSVGEY), 96–131 (ISHEAAQEAINEVDTDADGSLGFEDFVGLMTRRDLY), 137–173 (DGDGELKTAFEMFEVEKGSGCITPKGLQKMLVKLGES), and 174–205 (RTYGECEAMIKFYDIDGNGILDFHEFRQMMTV). Ca(2+) is bound by residues Asp73, Asp75, Asp77, Lys79, Glu84, Asp109, Asp111, Asp113, Ser115, and Asp120. Ca(2+) contacts are provided by Asp187, Asp189, Asn191, and Glu198.

Its function is as follows. Potential calcium sensor. The protein is Probable calcium-binding protein CML41 (CML41) of Arabidopsis thaliana (Mouse-ear cress).